The following is a 337-amino-acid chain: Putative transcription activator protein HfaB (337 aa).

Polar residues predominate over residues 303-313 (AYNNLGTNNAQ). The disordered stretch occupies residues 303-337 (AYNNLGTNNAQTRDDPSRWNARRDPDIRDAKRGRY). A compositionally biased stretch (basic and acidic residues) spans 314 to 337 (TRDDPSRWNARRDPDIRDAKRGRY).

Functionally, required for the attachment of the holdfast to the cell. May be involved in the positive regulation of hfaC. The protein is Putative transcription activator protein HfaB (hfaB) of Caulobacter vibrioides (strain ATCC 19089 / CIP 103742 / CB 15) (Caulobacter crescentus).